A 273-amino-acid chain; its full sequence is NADPH-dependent 7-cyano-7-deazaguanine reductase (273 aa).

A substrate-binding site is contributed by 80 to 82; it reads VES. 82 to 83 contributes to the NADPH binding site; that stretch reads SK. The Thioimide intermediate role is filled by Cys180. Residue Asp187 is the Proton donor of the active site. Residue 219–220 coordinates substrate; it reads HE. An NADPH-binding site is contributed by 248–249; it reads RG.

This sequence belongs to the GTP cyclohydrolase I family. QueF type 2 subfamily. Homodimer.

The protein localises to the cytoplasm. It carries out the reaction 7-aminomethyl-7-carbaguanine + 2 NADP(+) = 7-cyano-7-deazaguanine + 2 NADPH + 3 H(+). The protein operates within tRNA modification; tRNA-queuosine biosynthesis. Its function is as follows. Catalyzes the NADPH-dependent reduction of 7-cyano-7-deazaguanine (preQ0) to 7-aminomethyl-7-deazaguanine (preQ1). This is NADPH-dependent 7-cyano-7-deazaguanine reductase from Bordetella bronchiseptica (strain ATCC BAA-588 / NCTC 13252 / RB50) (Alcaligenes bronchisepticus).